The primary structure comprises 87 residues: RNA-binding protein Hfq (87 aa).

The region spanning 9-68 (DPYLNVLRKERIPVSIYLVNGIKLQGQVESFDQFVVLLKNTVSQMVYKHAISTVVPSRPV) is the Sm domain.

This sequence belongs to the Hfq family. In terms of assembly, homohexamer.

Functionally, RNA chaperone that binds small regulatory RNA (sRNAs) and mRNAs to facilitate mRNA translational regulation in response to envelope stress, environmental stress and changes in metabolite concentrations. Also binds with high specificity to tRNAs. The protein is RNA-binding protein Hfq of Teredinibacter turnerae (strain ATCC 39867 / T7901).